A 566-amino-acid chain; its full sequence is Arginine--tRNA ligase (566 aa).

Positions A129–H139 match the 'HIGH' region motif.

Belongs to the class-I aminoacyl-tRNA synthetase family. In terms of assembly, monomer.

The protein localises to the cytoplasm. It catalyses the reaction tRNA(Arg) + L-arginine + ATP = L-arginyl-tRNA(Arg) + AMP + diphosphate. This Wolbachia pipientis subsp. Culex pipiens (strain wPip) protein is Arginine--tRNA ligase.